We begin with the raw amino-acid sequence, 155 residues long: Small ribosomal subunit protein uS7c (155 aa).

It belongs to the universal ribosomal protein uS7 family. As to quaternary structure, part of the 30S ribosomal subunit.

It localises to the plastid. Its subcellular location is the chloroplast. Functionally, one of the primary rRNA binding proteins, it binds directly to 16S rRNA where it nucleates assembly of the head domain of the 30S subunit. The chain is Small ribosomal subunit protein uS7c (rps7) from Aristolochia macrophylla (Dutchman's pipe vine).